A 518-amino-acid chain; its full sequence is Nitrogenase iron-iron protein alpha chain (518 aa).

Positions 49 and 75 each coordinate [8Fe-7S] cluster. Positions 257 and 423 each coordinate [8Fe-9S-C-homocitryl] cluster.

Hexamer of two alpha, two beta, and two delta chains. [8Fe-7S] cluster is required as a cofactor. The cofactor is [8Fe-9S-C-homocitryl] cluster.

The enzyme catalyses N2 + 8 reduced [2Fe-2S]-[ferredoxin] + 16 ATP + 16 H2O = H2 + 8 oxidized [2Fe-2S]-[ferredoxin] + 2 NH4(+) + 16 ADP + 16 phosphate + 6 H(+). Functionally, this iron-iron protein is part of the nitrogenase complex that catalyzes the key enzymatic reactions in nitrogen fixation. Other nitrogenase complexes utilize a molybdenum-iron protein or a vanadium-iron protein. This chain is Nitrogenase iron-iron protein alpha chain (anfD), found in Ruminiclostridium hungatei (Clostridium hungatei).